Here is an 82-residue protein sequence, read N- to C-terminus: Turripeptide OL139 (82 aa).

The disordered stretch occupies residues 58-82; that stretch reads HRTTRDTADKTHGGSQRDRFFQSIA.

In terms of processing, contains 6 disulfide bonds. Expressed by the venom duct.

It localises to the secreted. Its function is as follows. Acts as a neurotoxin by inhibiting an ion channel. The protein is Turripeptide OL139 of Iotyrris olangoensis (Sea snail).